We begin with the raw amino-acid sequence, 242 residues long: AA9 family lytic polysaccharide monooxygenase F (242 aa).

A signal peptide spans 1-20 (MVQFKLSTASLLALASYAAA). Cu(2+) is bound at residue histidine 21. The tract at residues 31 to 53 (GQTYPGADPHNPNPESPGWQAEN) is disordered. Cystine bridges form between cysteine 71/cysteine 192 and cysteine 112/cysteine 116. Histidine 101 contributes to the Cu(2+) binding site. O2-binding residues include histidine 178 and glutamine 187. Tyrosine 189 contacts Cu(2+).

Belongs to the polysaccharide monooxygenase AA9 family. It depends on Cu(2+) as a cofactor.

It is found in the secreted. It catalyses the reaction [(1-&gt;4)-beta-D-glucosyl]n+m + reduced acceptor + O2 = 4-dehydro-beta-D-glucosyl-[(1-&gt;4)-beta-D-glucosyl]n-1 + [(1-&gt;4)-beta-D-glucosyl]m + acceptor + H2O.. Functionally, lytic polysaccharide monooxygenase (LPMO) that depolymerizes crystalline and amorphous polysaccharides via the oxidation of scissile alpha- or beta-(1-4)-glycosidic bonds, yielding C1 or C4 oxidation products. Catalysis by LPMOs requires the reduction of the active-site copper from Cu(II) to Cu(I) by a reducing agent and H(2)O(2) or O(2) as a cosubstrate. Active on hemicelluloses, including xylan, glucomannan, and xyloglucan. Shows clear activity on cellooligosaccharides, generating C4 oxidation products. Has no activity on ivory nut mannan (INM), a linear beta-1,4-linked mannan without substitutions. This Malbranchea cinnamomea (Thermophilic fungus) protein is AA9 family lytic polysaccharide monooxygenase F.